A 176-amino-acid chain; its full sequence is Large ribosomal subunit protein uL6 (176 aa).

The protein belongs to the universal ribosomal protein uL6 family. As to quaternary structure, part of the 50S ribosomal subunit.

In terms of biological role, this protein binds to the 23S rRNA, and is important in its secondary structure. It is located near the subunit interface in the base of the L7/L12 stalk, and near the tRNA binding site of the peptidyltransferase center. This chain is Large ribosomal subunit protein uL6, found in Paraburkholderia xenovorans (strain LB400).